The chain runs to 912 residues: Protein SLFN14 (912 aa).

Residues 206–391 (ESTHVEFKRF…KVHKFKEALQ (186 aa)) are required for endoribonuclease activity. Residues 392-571 (RHLFPVTQEE…QMGCEFFNLL (180 aa)) form a required for ribosome binding region. 593-600 (CFPGVRKT) lines the ATP pocket.

Belongs to the Schlafen family. Subgroup III subfamily. Associates with ribosomes in an ATP-independent manner. It depends on Mg(2+) as a cofactor. The cofactor is Mn(2+). In terms of tissue distribution, expressed in megakaryocytes and platelets (at protein level). Weakly expressed in melanocytes and malignant melanoma cells.

The protein localises to the nucleus. Functionally, shows no ribosome-associated and endoribonuclease activities. Its function is as follows. Displays polysome-associated endoribonuclease activity towards mRNAs and rRNAs. May play a role in RNA surveillance pathways by recognizing stalled ribosomes and triggering endonucleolytic cleavage of aberrant mRNAs. Cleaves different types of rRNAs and mRNAs in a magnesium- and manganese-dependent and ATP-independent manner. Involved in correct maturation of megakaryocytes and especially important for proplatelet extension. The protein is Protein SLFN14 of Homo sapiens (Human).